We begin with the raw amino-acid sequence, 321 residues long: Biotin synthase (321 aa).

A Radical SAM core domain is found at 45–271 (YYGKKVKLNM…INPTKEIRIA (227 aa)). [4Fe-4S] cluster is bound by residues Cys63, Cys67, and Cys70. 4 residues coordinate [2Fe-2S] cluster: Cys106, Cys139, Cys199, and Arg269.

This sequence belongs to the radical SAM superfamily. Biotin synthase family. As to quaternary structure, homodimer. Requires [4Fe-4S] cluster as cofactor. It depends on [2Fe-2S] cluster as a cofactor.

The enzyme catalyses (4R,5S)-dethiobiotin + (sulfur carrier)-SH + 2 reduced [2Fe-2S]-[ferredoxin] + 2 S-adenosyl-L-methionine = (sulfur carrier)-H + biotin + 2 5'-deoxyadenosine + 2 L-methionine + 2 oxidized [2Fe-2S]-[ferredoxin]. Its pathway is cofactor biosynthesis; biotin biosynthesis; biotin from 7,8-diaminononanoate: step 2/2. Catalyzes the conversion of dethiobiotin (DTB) to biotin by the insertion of a sulfur atom into dethiobiotin via a radical-based mechanism. The sequence is that of Biotin synthase from Staphylococcus epidermidis (strain ATCC 35984 / DSM 28319 / BCRC 17069 / CCUG 31568 / BM 3577 / RP62A).